The following is a 615-amino-acid chain: Medium-chain acyl-CoA ligase ACSF2, mitochondrial (615 aa).

The transit peptide at 1–41 (MAVYVGMLRLGRLCAGSSGVLGARVALSRSWQEARLQGVRF) directs the protein to the mitochondrion. Lys179 bears the N6-acetyllysine mark. Position 182 is an N6-acetyllysine; alternate (Lys182). Residue Lys182 is modified to N6-succinyllysine; alternate. Residue 263-271 (TSGTTGSPK) coordinates ATP. N6-acetyllysine occurs at positions 340 and 398. An N6-succinyllysine modification is found at Lys478. Residues Asp493 and Arg508 each contribute to the ATP site. Lys510 carries the post-translational modification N6-acetyllysine. 2 positions are modified to N6-acetyllysine; alternate: Lys544 and Lys570. Lys544 and Lys570 each carry N6-succinyllysine; alternate. Residue Lys599 participates in ATP binding. Lys599 is subject to N6-succinyllysine.

Belongs to the ATP-dependent AMP-binding enzyme family.

Its subcellular location is the mitochondrion. The catalysed reaction is a medium-chain fatty acid + ATP + CoA = a medium-chain fatty acyl-CoA + AMP + diphosphate. It catalyses the reaction octanoate + ATP + CoA = octanoyl-CoA + AMP + diphosphate. Acyl-CoA synthases catalyze the initial reaction in fatty acid metabolism, by forming a thioester with CoA. Has some preference toward medium-chain substrates. Plays a role in adipocyte differentiation. The polypeptide is Medium-chain acyl-CoA ligase ACSF2, mitochondrial (Pongo abelii (Sumatran orangutan)).